Reading from the N-terminus, the 277-residue chain is Phosphoenolpyruvate synthase regulatory protein (277 aa).

An ADP-binding site is contributed by 157–164 (GVSRCGKT).

Belongs to the pyruvate, phosphate/water dikinase regulatory protein family. PSRP subfamily.

It catalyses the reaction [pyruvate, water dikinase] + ADP = [pyruvate, water dikinase]-phosphate + AMP + H(+). The enzyme catalyses [pyruvate, water dikinase]-phosphate + phosphate + H(+) = [pyruvate, water dikinase] + diphosphate. Its function is as follows. Bifunctional serine/threonine kinase and phosphorylase involved in the regulation of the phosphoenolpyruvate synthase (PEPS) by catalyzing its phosphorylation/dephosphorylation. This chain is Phosphoenolpyruvate synthase regulatory protein, found in Escherichia coli O7:K1 (strain IAI39 / ExPEC).